A 284-amino-acid chain; its full sequence is Pantothenate synthetase (284 aa).

ATP is bound at residue 30-37 (MGNLHQGH). H37 (proton donor) is an active-site residue. Q61 is a binding site for (R)-pantoate. Q61 serves as a coordination point for beta-alanine. An ATP-binding site is contributed by 149 to 152 (GQKD). Residue Q155 participates in (R)-pantoate binding. ATP-binding positions include V178 and 186–189 (LSSR).

This sequence belongs to the pantothenate synthetase family. In terms of assembly, homodimer.

It is found in the cytoplasm. The catalysed reaction is (R)-pantoate + beta-alanine + ATP = (R)-pantothenate + AMP + diphosphate + H(+). It participates in cofactor biosynthesis; (R)-pantothenate biosynthesis; (R)-pantothenate from (R)-pantoate and beta-alanine: step 1/1. Catalyzes the condensation of pantoate with beta-alanine in an ATP-dependent reaction via a pantoyl-adenylate intermediate. This Aeromonas salmonicida (strain A449) protein is Pantothenate synthetase.